The chain runs to 182 residues: uncharacterized protein (182 aa).

It belongs to the mimivirus L6/L7/L57 family.

This is an uncharacterized protein from Acanthamoeba polyphaga mimivirus (APMV).